A 223-amino-acid chain; its full sequence is Putative nudix hydrolase 2 (223 aa).

Positions 72 to 213 (ASADGVSIIA…SIVVESTLLA (142 aa)) constitute a Nudix hydrolase domain. Residues 111-132 (GLIDAGETAQQAAIRELKEETG) carry the Nudix box motif. Mg(2+) contacts are provided by Glu-126 and Glu-130.

This sequence belongs to the Nudix hydrolase family. Mg(2+) is required as a cofactor. Mn(2+) serves as cofactor.

Its function is as follows. Probably mediates the hydrolysis of some nucleoside diphosphate derivatives. The sequence is that of Putative nudix hydrolase 2 (ndx-2) from Caenorhabditis elegans.